The chain runs to 366 residues: Flagellar P-ring protein (366 aa).

An N-terminal signal peptide occupies residues 1–27 (MKSKYSIFCMFLLRGFIFLGTVFSLNS).

The protein belongs to the FlgI family. The basal body constitutes a major portion of the flagellar organelle and consists of four rings (L,P,S, and M) mounted on a central rod.

Its subcellular location is the periplasm. It localises to the bacterial flagellum basal body. Assembles around the rod to form the L-ring and probably protects the motor/basal body from shearing forces during rotation. The polypeptide is Flagellar P-ring protein (Leptospira interrogans serogroup Icterohaemorrhagiae serovar copenhageni (strain Fiocruz L1-130)).